A 361-amino-acid polypeptide reads, in one-letter code: Hydroxymethylglutaryl-CoA synthase (361 aa).

The active-site Proton donor/acceptor is the Glu92. Residue Cys124 is the Acyl-thioester intermediate of the active site. Cys124, Ser165, Thr214, and His247 together coordinate (3S)-3-hydroxy-3-methylglutaryl-CoA. Catalysis depends on His247, which acts as the Proton donor/acceptor. Lys252 contributes to the CoA binding site. 3 residues coordinate (3S)-3-hydroxy-3-methylglutaryl-CoA: Lys256, Asn279, and Ser309.

The protein belongs to the thiolase-like superfamily. Archaeal HMG-CoA synthase family. As to quaternary structure, interacts with acetoacetyl-CoA thiolase that catalyzes the precedent step in the pathway and with a DUF35 protein. The acetoacetyl-CoA thiolase/HMG-CoA synthase complex channels the intermediate via a fused CoA-binding site, which allows for efficient coupling of the endergonic thiolase reaction with the exergonic HMGCS reaction.

It catalyses the reaction acetoacetyl-CoA + acetyl-CoA + H2O = (3S)-3-hydroxy-3-methylglutaryl-CoA + CoA + H(+). Its pathway is metabolic intermediate biosynthesis; (R)-mevalonate biosynthesis; (R)-mevalonate from acetyl-CoA: step 2/3. Catalyzes the condensation of acetyl-CoA with acetoacetyl-CoA to form 3-hydroxy-3-methylglutaryl-CoA (HMG-CoA). Functions in the mevalonate (MVA) pathway leading to isopentenyl diphosphate (IPP), a key precursor for the biosynthesis of isoprenoid compounds that are building blocks of archaeal membrane lipids. This is Hydroxymethylglutaryl-CoA synthase from Aeropyrum pernix (strain ATCC 700893 / DSM 11879 / JCM 9820 / NBRC 100138 / K1).